A 475-amino-acid chain; its full sequence is Glutamate--tRNA ligase 2 (475 aa).

Positions 11 to 21 (PSPTGFLHIGG) match the 'HIGH' region motif. The segment covering 116–133 (AEGRPPRYDGTWRDKDPA) has biased composition (basic and acidic residues). The interval 116–137 (AEGRPPRYDGTWRDKDPAEAPS) is disordered. Residues 240-244 (KLSKR) carry the 'KMSKS' region motif. Lys243 is an ATP binding site.

Belongs to the class-I aminoacyl-tRNA synthetase family. Glutamate--tRNA ligase type 1 subfamily. As to quaternary structure, monomer.

It localises to the cytoplasm. It carries out the reaction tRNA(Glu) + L-glutamate + ATP = L-glutamyl-tRNA(Glu) + AMP + diphosphate. Functionally, catalyzes the attachment of glutamate to tRNA(Glu) in a two-step reaction: glutamate is first activated by ATP to form Glu-AMP and then transferred to the acceptor end of tRNA(Glu). The chain is Glutamate--tRNA ligase 2 from Chelativorans sp. (strain BNC1).